A 215-amino-acid chain; its full sequence is Pyridoxine/pyridoxamine 5'-phosphate oxidase (215 aa).

Substrate contacts are provided by residues 11–14 and lysine 69; that span reads RRDY. Residues 64 to 69, 79 to 80, lysine 86, and glutamine 108 each bind FMN; these read RVVLLK and YT. Substrate is bound by residues tyrosine 126, arginine 130, and serine 134. FMN is bound by residues 143–144 and tryptophan 188; that span reads QS. Residue 194–196 coordinates substrate; it reads RLH. Arginine 198 contacts FMN.

Belongs to the pyridoxamine 5'-phosphate oxidase family. As to quaternary structure, homodimer. FMN serves as cofactor.

The enzyme catalyses pyridoxamine 5'-phosphate + O2 + H2O = pyridoxal 5'-phosphate + H2O2 + NH4(+). It catalyses the reaction pyridoxine 5'-phosphate + O2 = pyridoxal 5'-phosphate + H2O2. It functions in the pathway cofactor metabolism; pyridoxal 5'-phosphate salvage; pyridoxal 5'-phosphate from pyridoxamine 5'-phosphate: step 1/1. It participates in cofactor metabolism; pyridoxal 5'-phosphate salvage; pyridoxal 5'-phosphate from pyridoxine 5'-phosphate: step 1/1. Functionally, catalyzes the oxidation of either pyridoxine 5'-phosphate (PNP) or pyridoxamine 5'-phosphate (PMP) into pyridoxal 5'-phosphate (PLP). The protein is Pyridoxine/pyridoxamine 5'-phosphate oxidase of Legionella pneumophila (strain Paris).